A 276-amino-acid polypeptide reads, in one-letter code: MAHYAIGDIQGCFDELTALLGKIGFNHGTDTLWLTGDIVNRGPKSLETLQFCIRHENSVQIVLGNHDLHLLAVGYGEGAPKRSDTIEPILKHPDGRKMLDWLRAQPLLIREGNRVMVHAGILPQWRITKAESLAGEAEAELRGKKYVKFFSKMYGNKPAAWDEGLEGYARLRFIVNAFTRMRALTFKNELDFDYKSTVKKMPLYLRPWFKAPDRQNLDHTIIFGHWSSLGYTNADNVISLDTGALWGGQLTAVNLETEEITQVQAAGGIDWKSFTK.

Belongs to the Ap4A hydrolase family.

It carries out the reaction P(1),P(4)-bis(5'-adenosyl) tetraphosphate + H2O = 2 ADP + 2 H(+). In terms of biological role, hydrolyzes diadenosine 5',5'''-P1,P4-tetraphosphate to yield ADP. This Neisseria meningitidis serogroup A / serotype 4A (strain DSM 15465 / Z2491) protein is Bis(5'-nucleosyl)-tetraphosphatase, symmetrical (apaH).